The sequence spans 465 residues: UDP-N-acetylmuramate--L-alanine ligase (465 aa).

Residue 112-118 (GTHGKTT) coordinates ATP.

Belongs to the MurCDEF family.

The protein resides in the cytoplasm. It catalyses the reaction UDP-N-acetyl-alpha-D-muramate + L-alanine + ATP = UDP-N-acetyl-alpha-D-muramoyl-L-alanine + ADP + phosphate + H(+). Its pathway is cell wall biogenesis; peptidoglycan biosynthesis. Cell wall formation. The chain is UDP-N-acetylmuramate--L-alanine ligase from Burkholderia thailandensis (strain ATCC 700388 / DSM 13276 / CCUG 48851 / CIP 106301 / E264).